The following is a 505-amino-acid chain: 6-phosphofructo-2-kinase/fructose-2,6-bisphosphatase 2 (505 aa).

The disordered stretch occupies residues 1–20 (MSGASSSEQNNNSYETKTPN). Position 2 is an N-acetylserine (S2). Residues 2–248 (SGASSSEQNN…VYYLMNIHVQ (247 aa)) form a 6-phosphofructo-2-kinase region. Residue S29 is modified to Phosphoserine; by PKA. 45-53 (GLPARGKTY) contributes to the ATP binding site. Beta-D-fructose 6-phosphate-binding residues include R78 and R102. The active site involves D128. 2 residues coordinate beta-D-fructose 6-phosphate: T130 and R136. Residue C158 is part of the active site. 167–172 (NILEVK) is a binding site for ATP. Residues K172, R193, and Y197 each contribute to the beta-D-fructose 6-phosphate site. Residues 249 to 505 (PRTIYLCRHG…RAQDMQEGAD (257 aa)) are fructose-2,6-bisphosphatase. Beta-D-fructose 2,6-bisphosphate is bound at residue R256. The active-site Tele-phosphohistidine intermediate is the H257. Beta-D-fructose 2,6-bisphosphate is bound by residues N263 and G269. E326 (proton donor/acceptor) is an active-site residue. Residues Y337, R351, K355, Y366, Q392, and R396 each coordinate beta-D-fructose 2,6-bisphosphate. ATP is bound at residue 348-351 (FALR). ATP is bound by residues 392-396 (QAVMR) and Y428. Residues 445-505 (HRDKPTNNFP…RAQDMQEGAD (61 aa)) are disordered. Polar residues predominate over residues 450 to 476 (TNNFPKNQTPVRMRRNSFTPLSSSNTI). A Phosphoserine; by AMPK modification is found at S466. Phosphothreonine is present on residues T468 and T475. Position 483 is a phosphoserine; by BRAF (S483). Phosphoserine occurs at positions 486 and 493.

The protein in the C-terminal section; belongs to the phosphoglycerate mutase family. In terms of assembly, homodimer. Forms a heterodimer with PFKFB3. In terms of processing, phosphorylation by AMPK stimulates activity. Heart.

The enzyme catalyses beta-D-fructose 2,6-bisphosphate + H2O = beta-D-fructose 6-phosphate + phosphate. It catalyses the reaction beta-D-fructose 6-phosphate + ATP = beta-D-fructose 2,6-bisphosphate + ADP + H(+). With respect to regulation, phosphorylation results in the activation of the kinase activity. Its function is as follows. Synthesis and degradation of fructose 2,6-bisphosphate. This chain is 6-phosphofructo-2-kinase/fructose-2,6-bisphosphatase 2, found in Homo sapiens (Human).